Here is a 143-residue protein sequence, read N- to C-terminus: Ribulose bisphosphate carboxylase large chain (143 aa).

The propeptide occupies 1 to 2 (MS). P3 carries the N-acetylproline modification. K14 carries the post-translational modification N6,N6,N6-trimethyllysine. A substrate-binding site is contributed by X123.

The protein belongs to the RuBisCO large chain family. Type I subfamily. Heterohexadecamer of 8 large chains and 8 small chains.

Its subcellular location is the plastid. It localises to the chloroplast. The catalysed reaction is 2 (2R)-3-phosphoglycerate + 2 H(+) = D-ribulose 1,5-bisphosphate + CO2 + H2O. The enzyme catalyses D-ribulose 1,5-bisphosphate + O2 = 2-phosphoglycolate + (2R)-3-phosphoglycerate + 2 H(+). In terms of biological role, ruBisCO catalyzes two reactions: the carboxylation of D-ribulose 1,5-bisphosphate, the primary event in carbon dioxide fixation, as well as the oxidative fragmentation of the pentose substrate in the photorespiration process. Both reactions occur simultaneously and in competition at the same active site. This Nemopanthus mucronatus (Catberry) protein is Ribulose bisphosphate carboxylase large chain (rbcL).